We begin with the raw amino-acid sequence, 140 residues long: Ribosome-binding factor A (140 aa).

A disordered region spans residues M1 to R23.

This sequence belongs to the RbfA family. As to quaternary structure, monomer. Binds 30S ribosomal subunits, but not 50S ribosomal subunits or 70S ribosomes.

It localises to the cytoplasm. Its function is as follows. One of several proteins that assist in the late maturation steps of the functional core of the 30S ribosomal subunit. Associates with free 30S ribosomal subunits (but not with 30S subunits that are part of 70S ribosomes or polysomes). Required for efficient processing of 16S rRNA. May interact with the 5'-terminal helix region of 16S rRNA. The chain is Ribosome-binding factor A from Acidiphilium cryptum (strain JF-5).